The following is a 222-amino-acid chain: Triosephosphate isomerase (222 aa).

Residue 9-11 coordinates substrate; the sequence is NYK. His-93 serves as the catalytic Electrophile. Catalysis depends on Glu-141, which acts as the Proton acceptor. Substrate is bound by residues Ile-146, Gly-181, and 202–203; that span reads AS.

This sequence belongs to the triosephosphate isomerase family. As to quaternary structure, homotetramer; dimer of dimers.

Its subcellular location is the cytoplasm. It carries out the reaction D-glyceraldehyde 3-phosphate = dihydroxyacetone phosphate. The protein operates within carbohydrate biosynthesis; gluconeogenesis. It functions in the pathway carbohydrate degradation; glycolysis; D-glyceraldehyde 3-phosphate from glycerone phosphate: step 1/1. Functionally, involved in the gluconeogenesis. Catalyzes stereospecifically the conversion of dihydroxyacetone phosphate (DHAP) to D-glyceraldehyde-3-phosphate (G3P). This is Triosephosphate isomerase from Methanosarcina mazei (strain ATCC BAA-159 / DSM 3647 / Goe1 / Go1 / JCM 11833 / OCM 88) (Methanosarcina frisia).